Here is a 348-residue protein sequence, read N- to C-terminus: Probable protein phosphatase 2C 35 (348 aa).

Low complexity predominate over residues 11–24 (RYPSSSSDGDSRGP). The segment at 11 to 40 (RYPSSSSDGDSRGPLEANGVLKGKDQKPLG) is disordered. One can recognise a PPM-type phosphatase domain in the interval 52–342 (VYSVLSQRGY…DDITIIIVQI (291 aa)). Mn(2+) contacts are provided by Asp-93, Gly-94, Asp-289, and Asp-333.

The protein belongs to the PP2C family. Mg(2+) is required as a cofactor. The cofactor is Mn(2+).

The enzyme catalyses O-phospho-L-seryl-[protein] + H2O = L-seryl-[protein] + phosphate. The catalysed reaction is O-phospho-L-threonyl-[protein] + H2O = L-threonyl-[protein] + phosphate. The chain is Probable protein phosphatase 2C 35 from Arabidopsis thaliana (Mouse-ear cress).